Here is a 404-residue protein sequence, read N- to C-terminus: SAC3 domain-containing protein 1 (404 aa).

Disordered stretches follow at residues 1 to 58 (MAGR…GTCP) and 77 to 117 (RLEV…QLRP). Over residues 12 to 21 (PPRPAAPHPR) the composition is skewed to pro residues. Residues 87–101 (DPPRADPQRAVKEYS) show a composition bias toward basic and acidic residues. The 177-residue stretch at 203 to 379 (QVQEGFGSLR…TCKVLVESKL (177 aa)) folds into the PCI domain. A Phosphoserine modification is found at Ser402.

This sequence belongs to the SAC3 family. May be part of a SEM1-containing complex.

The protein resides in the cytoplasm. The protein localises to the cytoskeleton. It is found in the microtubule organizing center. It localises to the centrosome. Its subcellular location is the spindle. Functionally, involved in centrosome duplication and mitotic progression. The sequence is that of SAC3 domain-containing protein 1 (SAC3D1) from Homo sapiens (Human).